An 824-amino-acid polypeptide reads, in one-letter code: Translation initiation factor IF-2 (824 aa).

Disordered stretches follow at residues methionine 1 to lysine 32 and valine 45 to glutamine 232. Residues valine 45 to lysine 57 show a composition bias toward low complexity. Over residues lysine 86–alanine 144 the composition is skewed to basic and acidic residues. Over residues alanine 145–proline 167 the composition is skewed to low complexity. The segment covering alanine 170–arginine 193 has biased composition (basic and acidic residues). The tr-type G domain maps to threonine 321–glutamate 489. Positions glycine 330 to threonine 337 are G1. Position 330 to 337 (glycine 330 to threonine 337) interacts with GTP. Residues glycine 355–histidine 359 are G2. The G3 stretch occupies residues aspartate 377–glycine 380. GTP is bound by residues aspartate 377–histidine 381 and asparagine 431–aspartate 434. Residues asparagine 431–aspartate 434 are G4. The segment at serine 467–isoleucine 469 is G5.

Belongs to the TRAFAC class translation factor GTPase superfamily. Classic translation factor GTPase family. IF-2 subfamily.

It is found in the cytoplasm. In terms of biological role, one of the essential components for the initiation of protein synthesis. Protects formylmethionyl-tRNA from spontaneous hydrolysis and promotes its binding to the 30S ribosomal subunits. Also involved in the hydrolysis of GTP during the formation of the 70S ribosomal complex. The sequence is that of Translation initiation factor IF-2 from Roseobacter denitrificans (strain ATCC 33942 / OCh 114) (Erythrobacter sp. (strain OCh 114)).